A 253-amino-acid polypeptide reads, in one-letter code: Dehydration-responsive element-binding protein 1D (253 aa).

Polar residues predominate over residues 1–22 (MEKNTAASGQLMTSSAEATPSS). The disordered stretch occupies residues 1 to 31 (MEKNTAASGQLMTSSAEATPSSPKRPAGRTK). Residues 39–98 (VFRGVRWRGCAGRWVCKVRVPGSRGDRFWIGTSDTAEETARTHDAAMLALCGASASLNFA) constitute a DNA-binding region (AP2/ERF). The tract at residues 131–153 (RRVPAPGRGSTATATATSGDAAS) is disordered. Residues 134–153 (PAPGRGSTATATATSGDAAS) are compositionally biased toward low complexity.

This sequence belongs to the AP2/ERF transcription factor family. ERF subfamily.

Its subcellular location is the nucleus. Its function is as follows. Transcriptional activator that binds specifically to the DNA sequence 5'-[AG]CCGAC-3'. Binding to the C-repeat/DRE element mediates high salinity- and dehydration-inducible transcription. The polypeptide is Dehydration-responsive element-binding protein 1D (DREB1D) (Oryza sativa subsp. indica (Rice)).